The primary structure comprises 98 residues: Defensin-like protein 219 (98 aa).

Residues 1 to 16 (MKTIFVFLTLAVLVSS) form the signal peptide. 3 disulfides stabilise this stretch: C68–C85, C71–C90, and C75–C92.

This sequence belongs to the DEFL family.

It is found in the secreted. The protein is Defensin-like protein 219 of Arabidopsis thaliana (Mouse-ear cress).